A 619-amino-acid polypeptide reads, in one-letter code: Chaperone protein HscA homolog (619 aa).

The protein belongs to the heat shock protein 70 family.

Its function is as follows. Chaperone involved in the maturation of iron-sulfur cluster-containing proteins. Has a low intrinsic ATPase activity which is markedly stimulated by HscB. This is Chaperone protein HscA homolog from Acinetobacter baumannii (strain AB0057).